Here is a 963-residue protein sequence, read N- to C-terminus: Phosphoenolpyruvate carboxylase (963 aa).

Phosphoserine is present on serine 11. Residues histidine 172 and lysine 600 contribute to the active site.

This sequence belongs to the PEPCase type 1 family. As to quaternary structure, homotetramer. The cofactor is Mg(2+).

Its subcellular location is the cytoplasm. The catalysed reaction is oxaloacetate + phosphate = phosphoenolpyruvate + hydrogencarbonate. With respect to regulation, by light-reversible phosphorylation. In terms of biological role, through the carboxylation of phosphoenolpyruvate (PEP) it forms oxaloacetate, a four-carbon dicarboxylic acid source for the tricarboxylic acid cycle. The polypeptide is Phosphoenolpyruvate carboxylase (PPC) (Picea abies (Norway spruce)).